Here is a 743-residue protein sequence, read N- to C-terminus: Polyribonucleotide nucleotidyltransferase (743 aa).

Mg(2+) contacts are provided by Asp494 and Asp500. One can recognise a KH domain in the interval 561–620 (PQHAEVFVNPDIIRLIIGPGGKNIKAITAATGASVDIEDSGRVSIFAPTAEALEKAREMV). Residues 630–704 (GKNYNAKVRK…SRKAVLLEEQ (75 aa)) form the S1 motif domain. The segment at 702 to 743 (EEQGHPWNPEDTARPQRSDRGDRGDRRGDRGGRDRRDRGDRR) is disordered. A compositionally biased stretch (basic and acidic residues) spans 712–743 (DTARPQRSDRGDRGDRRGDRGGRDRRDRGDRR).

The protein belongs to the polyribonucleotide nucleotidyltransferase family. Requires Mg(2+) as cofactor.

It is found in the cytoplasm. The enzyme catalyses RNA(n+1) + phosphate = RNA(n) + a ribonucleoside 5'-diphosphate. Its function is as follows. Involved in mRNA degradation. Catalyzes the phosphorolysis of single-stranded polyribonucleotides processively in the 3'- to 5'-direction. This chain is Polyribonucleotide nucleotidyltransferase, found in Desulfovibrio desulfuricans (strain ATCC 27774 / DSM 6949 / MB).